Here is a 67-residue protein sequence, read N- to C-terminus: DNA-directed RNA polymerase subunit omega (67 aa).

The protein belongs to the RNA polymerase subunit omega family. The RNAP catalytic core consists of 2 alpha, 1 beta, 1 beta' and 1 omega subunit. When a sigma factor is associated with the core the holoenzyme is formed, which can initiate transcription.

The enzyme catalyses RNA(n) + a ribonucleoside 5'-triphosphate = RNA(n+1) + diphosphate. Promotes RNA polymerase assembly. Latches the N- and C-terminal regions of the beta' subunit thereby facilitating its interaction with the beta and alpha subunits. The chain is DNA-directed RNA polymerase subunit omega from Burkholderia multivorans (strain ATCC 17616 / 249).